The chain runs to 28 residues: Small spore coat assembly protein A (28 aa).

The chain crosses the membrane as a helical span at residues 8–28 (GFALLVVLFILLIIVGAAYIY).

This sequence belongs to the SscA family.

The protein localises to the spore coat. Its subcellular location is the membrane. Functionally, spore protein involved in the assembly of several components of the spore coat, including CotB, CotG and CotH, and in spore germination. In Bacillus subtilis (strain 168), this protein is Small spore coat assembly protein A.